The following is a 215-amino-acid chain: LexA repressor (215 aa).

Residues 28 to 48 constitute a DNA-binding region (H-T-H motif); that stretch reads RAEIAAELGFSSPNAAEEHLR. Active-site for autocatalytic cleavage activity residues include Ser133 and Lys170.

This sequence belongs to the peptidase S24 family. In terms of assembly, homodimer.

It catalyses the reaction Hydrolysis of Ala-|-Gly bond in repressor LexA.. In terms of biological role, represses a number of genes involved in the response to DNA damage (SOS response), including recA and lexA. In the presence of single-stranded DNA, RecA interacts with LexA causing an autocatalytic cleavage which disrupts the DNA-binding part of LexA, leading to derepression of the SOS regulon and eventually DNA repair. The polypeptide is LexA repressor (Burkholderia ambifaria (strain ATCC BAA-244 / DSM 16087 / CCUG 44356 / LMG 19182 / AMMD) (Burkholderia cepacia (strain AMMD))).